We begin with the raw amino-acid sequence, 109 residues long: Small ribosomal subunit protein bS18c (109 aa).

Residues 82-109 form a disordered region; sequence GFERSESTPRTNALKPRNKNKQNNQTQF.

It belongs to the bacterial ribosomal protein bS18 family. Part of the 30S ribosomal subunit.

The protein resides in the plastid. This chain is Small ribosomal subunit protein bS18c, found in Cuscuta reflexa (Southern Asian dodder).